The following is a 103-amino-acid chain: Large ribosomal subunit protein bL21 (103 aa).

It belongs to the bacterial ribosomal protein bL21 family. In terms of assembly, part of the 50S ribosomal subunit. Contacts protein L20.

In terms of biological role, this protein binds to 23S rRNA in the presence of protein L20. The polypeptide is Large ribosomal subunit protein bL21 (Nocardia farcinica (strain IFM 10152)).